The chain runs to 180 residues: ATP-dependent protease subunit HslV (180 aa).

The active site involves Thr-10. 3 residues coordinate Na(+): Gly-165, Cys-168, and Thr-171.

The protein belongs to the peptidase T1B family. HslV subfamily. As to quaternary structure, a double ring-shaped homohexamer of HslV is capped on each side by a ring-shaped HslU homohexamer. The assembly of the HslU/HslV complex is dependent on binding of ATP.

The protein localises to the cytoplasm. It carries out the reaction ATP-dependent cleavage of peptide bonds with broad specificity.. With respect to regulation, allosterically activated by HslU binding. In terms of biological role, protease subunit of a proteasome-like degradation complex believed to be a general protein degrading machinery. The polypeptide is ATP-dependent protease subunit HslV (Koribacter versatilis (strain Ellin345)).